The following is a 113-amino-acid chain: Protein SPIRAL1-like 1 (113 aa).

Positions 1–12 (MGRGVSVGGGQS) are enriched in gly residues. A disordered region spans residues 1 to 50 (MGRGVSVGGGQSSLGYLFGSGEAPKPAINNAPAPSSETLPISADPSPKHV). Residues 23-34 (APKPAINNAPAP) are compositionally biased toward low complexity. The residue at position 69 (Ser-69) is a Phosphoserine. Residues 79 to 113 (QNTGNFLTDRPSTKVHAAPGGGSSLDYLFGGGGSN) form a disordered region. A compositionally biased stretch (gly residues) spans 97 to 113 (PGGGSSLDYLFGGGGSN).

The protein belongs to the SPIRAL1 family. In terms of tissue distribution, detected in pollen of mature flowers.

Functionally, acts redundantly with SPR1 in maintaining the cortical microtubules organization essential for anisotropic cell growth. This chain is Protein SPIRAL1-like 1 (SP1L1), found in Arabidopsis thaliana (Mouse-ear cress).